The primary structure comprises 453 residues: Chromosomal replication initiator protein DnaA (453 aa).

Residues 1–75 (MSENMEELWS…SLKKISGKQL (75 aa)) are domain I, interacts with DnaA modulators. The segment at 75-114 (LKIKFLLPGEKIKMEEQNNENEEKPESTSKKSSQGSEHTT) is domain II. Over residues 87–103 (KMEEQNNENEEKPESTS) the composition is skewed to basic and acidic residues. The disordered stretch occupies residues 87 to 112 (KMEEQNNENEEKPESTSKKSSQGSEH). Residues 115–331 (WLNPKYTFDT…GGLIRVIAYS (217 aa)) form a domain III, AAA+ region region. G159, G161, K162, and T163 together coordinate ATP. A domain IV, binds dsDNA region spans residues 332-453 (SMANKKITKE…DEIKNLLHGD (122 aa)).

Belongs to the DnaA family. Oligomerizes as a right-handed, spiral filament on DNA at oriC.

Its subcellular location is the cytoplasm. Plays an essential role in the initiation and regulation of chromosomal replication. ATP-DnaA binds to the origin of replication (oriC) to initiate formation of the DNA replication initiation complex once per cell cycle. Binds the DnaA box (a 9 base pair repeat at the origin) and separates the double-stranded (ds)DNA. Forms a right-handed helical filament on oriC DNA; dsDNA binds to the exterior of the filament while single-stranded (ss)DNA is stabiized in the filament's interior. The ATP-DnaA-oriC complex binds and stabilizes one strand of the AT-rich DNA unwinding element (DUE), permitting loading of DNA polymerase. After initiation quickly degrades to an ADP-DnaA complex that is not apt for DNA replication. Binds acidic phospholipids. The protein is Chromosomal replication initiator protein DnaA of Natranaerobius thermophilus (strain ATCC BAA-1301 / DSM 18059 / JW/NM-WN-LF).